The primary structure comprises 392 residues: Alpha-(1,3)-fucosyltransferase fut-6 (392 aa).

Topologically, residues 1-12 are cytoplasmic; the sequence is MSQIGGATCTWR. A helical; Signal-anchor for type II membrane protein transmembrane segment spans residues 13–35; it reads YLGRFVTLGIYASVALFVWYTLV. Over 36 to 392 the chain is Lumenal; that stretch reads PTRSKHKDSI…CNNQIASKYL (357 aa). Asn158 is a glycosylation site (N-linked (GlcNAc...) asparagine).

Belongs to the glycosyltransferase 10 family. Unlike other alpha-(1,3)-fucosyltransferases, appears not to require a divalent metal cation as cofactor. serves as cofactor.

It localises to the golgi apparatus. Its subcellular location is the golgi stack membrane. Its pathway is protein modification; protein glycosylation. With respect to regulation, inhibited by divalent metal cations. Involved in the fucosylation of N-glycans. Preferentially catalyzes the addition of fucose in alpha 1-3 linkage to the distal GlcNAc residue in N-glycans. Catalyzes the transfer of fucose to Gal-beta-1-4-GlcNAc-alpha-pNP (LN-pNP) and Gal-beta-1-4-GlcNAc-beta-1-3-Gal-beta-1-4-Glc (LNnT). Unlike alpha-(1,3)-fucosyltransferase fut-1, does not transfer fucose to Man-alpha-1-3-(Man-alpha-1-6)-Man-beta-1-4-GlcNAc-beta-1-4-GlcNAc-beta-1-Asn (M3), Man-alpha-1-3-(Man-alpha-1-6)-Man-beta-1-4-GlcNAc-beta-1-4-(Fuc-alpha-1-6)-GlcNAc-beta-1-Asn (M3F6) and GlcNAc-beta-1-2-Man-alpha-1-3-(GlcNAc-beta-1-2-Man-alpha-1-6)-Man-beta-1-4-GlcNAc-beta-1-4(Fuc-alpha-1-6)-GlcNAc-beta-1-Asn (GnM3F6). The chain is Alpha-(1,3)-fucosyltransferase fut-6 from Caenorhabditis elegans.